We begin with the raw amino-acid sequence, 68 residues long: Metallothionein (68 aa).

A divalent metal cation contacts are provided by C7, C9, C14, C16, C20, C22, C25, C27, C35, C39, C40, C42, C43, C47, C50, C54, C56, C64, C66, and C67.

This sequence belongs to the metallothionein superfamily. Type 1 family.

Metallothioneins have a high content of cysteine residues that bind various heavy metals. In Scyliorhinus torazame (Cloudy catshark), this protein is Metallothionein (mt).